The primary structure comprises 77 residues: Mu-conotoxin BuIIIA (77 aa).

The first 22 residues, Met1–Pro22, serve as a signal peptide directing secretion. A propeptide spanning residues Gln23–Arg51 is cleaved from the precursor. Residues Asp26–Ser46 form a disordered region. Basic and acidic residues predominate over residues Pro28–Asp38. 3 disulfide bridges follow: Cys56/Cys67, Cys57/Cys73, and Cys63/Cys74. Cys74 carries the cysteine amide modification.

Belongs to the conotoxin M superfamily. Expressed by the venom duct.

It localises to the secreted. Its function is as follows. Mu-conotoxins block voltage-gated sodium channels (Nav). This synthetic toxin potently blocks rNav1.2/SCN2A, and rNav1.4/SCN4A. It also moderately blocks rNav1.1/SCN1A, rNav1.3/SCN3A, rNav1.5/SCN5A, and mNav1.6/SCN8A. The inhibition is reversible. The chain is Mu-conotoxin BuIIIA from Conus bullatus (Bubble cone).